Consider the following 91-residue polypeptide: Large ribosomal subunit protein bL27 (91 aa).

The tract at residues 1–22 (MAHKKAGGSSRNGRDSAGRRLG) is disordered.

The protein belongs to the bacterial ribosomal protein bL27 family.

This is Large ribosomal subunit protein bL27 from Methylocella silvestris (strain DSM 15510 / CIP 108128 / LMG 27833 / NCIMB 13906 / BL2).